A 209-amino-acid polypeptide reads, in one-letter code: Imidazole glycerol phosphate synthase subunit HisH (209 aa).

The region spanning 1–205 (MIAIIDYGMG…KGVVETWKSS (205 aa)) is the Glutamine amidotransferase type-1 domain. The Nucleophile role is filled by C79. Catalysis depends on residues H180 and E182.

In terms of assembly, heterodimer of HisH and HisF.

The protein localises to the cytoplasm. It catalyses the reaction 5-[(5-phospho-1-deoxy-D-ribulos-1-ylimino)methylamino]-1-(5-phospho-beta-D-ribosyl)imidazole-4-carboxamide + L-glutamine = D-erythro-1-(imidazol-4-yl)glycerol 3-phosphate + 5-amino-1-(5-phospho-beta-D-ribosyl)imidazole-4-carboxamide + L-glutamate + H(+). The catalysed reaction is L-glutamine + H2O = L-glutamate + NH4(+). The protein operates within amino-acid biosynthesis; L-histidine biosynthesis; L-histidine from 5-phospho-alpha-D-ribose 1-diphosphate: step 5/9. Its function is as follows. IGPS catalyzes the conversion of PRFAR and glutamine to IGP, AICAR and glutamate. The HisH subunit catalyzes the hydrolysis of glutamine to glutamate and ammonia as part of the synthesis of IGP and AICAR. The resulting ammonia molecule is channeled to the active site of HisF. This is Imidazole glycerol phosphate synthase subunit HisH from Bacillus cereus (strain AH187).